Consider the following 497-residue polypeptide: Acetyltransferase FGR3 (497 aa).

Residues aspartate 221 and isoleucine 224 each coordinate Ca(2+). Lysine 255 and aspartate 303 together coordinate CoA. Aspartate 386 contacts Ca(2+). Residue threonine 396 participates in CoA binding. Residue aspartate 462 coordinates Ca(2+). The interval aspartate 477–serine 497 is disordered. Residues asparagine 485 to serine 497 show a composition bias toward low complexity.

Belongs to the trichothecene 3-O-acetyltransferase family.

It functions in the pathway secondary metabolite biosynthesis. Its function is as follows. Acetyltransferase; part of the gene cluster that mediates the biosynthesis of the tetraketides fugralins such as linear fugralin A and cyclic fugralin B, volatile compounds that play a role in the asexual reproductive cycle but are not involved in pathogenicity. One of the key features of fugralins is the presence of a double methyl group, which is only rarely encountered in fungal secondary metabolites. As the fugralins cluster does not contain an independent methyltransferase, the PKS FGR1 is probably responsible for adding two methyl groups to the same carbon atom. Fugralin B is similar to fugralin A except for a cyclization between the carboxylic acid C-8 and the alcohol on C-4 resulting in a six membered lactone ring, probably catalyzed by the cyclase FGR4. The exact role of the individual cluster genes remains unknown and further work is needed to unravel the biosynthetic pathway. The sequence is that of Acetyltransferase FGR3 from Gibberella zeae (strain ATCC MYA-4620 / CBS 123657 / FGSC 9075 / NRRL 31084 / PH-1) (Wheat head blight fungus).